A 368-amino-acid polypeptide reads, in one-letter code: 3-dehydroquinate synthase (368 aa).

Residues 69–74 (DGEAYK), 103–107 (GVIGD), 127–128 (TT), K140, and K149 each bind NAD(+). Residues E182, H245, and H262 each coordinate Zn(2+).

Belongs to the sugar phosphate cyclases superfamily. Dehydroquinate synthase family. The cofactor is Co(2+). Zn(2+) is required as a cofactor. Requires NAD(+) as cofactor.

It localises to the cytoplasm. The enzyme catalyses 7-phospho-2-dehydro-3-deoxy-D-arabino-heptonate = 3-dehydroquinate + phosphate. It functions in the pathway metabolic intermediate biosynthesis; chorismate biosynthesis; chorismate from D-erythrose 4-phosphate and phosphoenolpyruvate: step 2/7. Functionally, catalyzes the conversion of 3-deoxy-D-arabino-heptulosonate 7-phosphate (DAHP) to dehydroquinate (DHQ). In Pseudomonas paraeruginosa (strain DSM 24068 / PA7) (Pseudomonas aeruginosa (strain PA7)), this protein is 3-dehydroquinate synthase.